The primary structure comprises 447 residues: MIKIYDTMTRSLRKFVPLTENTVNMYVCGPTVYNYIHIGNARSAVAFDTIRRYFEYTGYQVNYISNFTDVDDKIIKAATQAGVSPKELSDRFIAAFIEDTKALGVKPATQNPRVMDYIAEIISFVESLIEKDFAYEADGDVYFRVEKSEHYAKLANKTLSELEVGASGRTDAETALKENPLDFALWKSAKAGEVSWDSPWGFGRPGWHIECSVMATEILGDTIDIHGGGADLEFPHHTNEIAQSEAKTGKTFANYWMHNGFVTVDNEKMSKSLGNFVTVHEMLQTVDGQVLRFFLATQQYRKPINFTEKAIHDAEINLKYLKNTLQQPLTETADEQELKQFVIAFQDAMDDDFNTANGITVVFDMAKWINSGSYTEPVKSAFEKMLAVFGIIFEEEVLEVDIEALIAKRQEARANRDFATADAIRDQLAAQGIKLLDTKDGVRWLRD.

Cysteine 28 serves as a coordination point for Zn(2+). The 'HIGH' region signature appears at 30–40 (PTVYNYIHIGN). 3 residues coordinate Zn(2+): cysteine 211, histidine 236, and glutamate 240. The 'KMSKS' region signature appears at 268–272 (KMSKS). Lysine 271 contributes to the ATP binding site.

Belongs to the class-I aminoacyl-tRNA synthetase family. As to quaternary structure, monomer. The cofactor is Zn(2+).

Its subcellular location is the cytoplasm. The enzyme catalyses tRNA(Cys) + L-cysteine + ATP = L-cysteinyl-tRNA(Cys) + AMP + diphosphate. The protein is Cysteine--tRNA ligase of Streptococcus pyogenes serotype M18 (strain MGAS8232).